Reading from the N-terminus, the 361-residue chain is Queuine tRNA-ribosyltransferase (361 aa).

Aspartate 89 serves as the catalytic Proton acceptor. Residues 89-93, aspartate 143, glutamine 185, and glycine 212 each bind substrate; that span reads DSGGF. The interval 243–249 is RNA binding; it reads GVGTPED. Aspartate 262 serves as the catalytic Nucleophile. Residues 267–271 form an RNA binding; important for wobble base 34 recognition region; that stretch reads TRNAR. 4 residues coordinate Zn(2+): cysteine 300, cysteine 302, cysteine 305, and histidine 331.

It belongs to the queuine tRNA-ribosyltransferase family. As to quaternary structure, homodimer. Within each dimer, one monomer is responsible for RNA recognition and catalysis, while the other monomer binds to the replacement base PreQ1. Requires Zn(2+) as cofactor.

The catalysed reaction is 7-aminomethyl-7-carbaguanine + guanosine(34) in tRNA = 7-aminomethyl-7-carbaguanosine(34) in tRNA + guanine. Its pathway is tRNA modification; tRNA-queuosine biosynthesis. Functionally, catalyzes the base-exchange of a guanine (G) residue with the queuine precursor 7-aminomethyl-7-deazaguanine (PreQ1) at position 34 (anticodon wobble position) in tRNAs with GU(N) anticodons (tRNA-Asp, -Asn, -His and -Tyr). Catalysis occurs through a double-displacement mechanism. The nucleophile active site attacks the C1' of nucleotide 34 to detach the guanine base from the RNA, forming a covalent enzyme-RNA intermediate. The proton acceptor active site deprotonates the incoming PreQ1, allowing a nucleophilic attack on the C1' of the ribose to form the product. After dissociation, two additional enzymatic reactions on the tRNA convert PreQ1 to queuine (Q), resulting in the hypermodified nucleoside queuosine (7-(((4,5-cis-dihydroxy-2-cyclopenten-1-yl)amino)methyl)-7-deazaguanosine). The polypeptide is Queuine tRNA-ribosyltransferase (Nitrosomonas eutropha (strain DSM 101675 / C91 / Nm57)).